Here is a 2161-residue protein sequence, read N- to C-terminus: MTHSPATSEDEERHSASECPEGGSESDSSPDGPGRGPRGTRGQGSGAPGSLASVRGLQGRSMSVPDDAHFSMMVFRIGIPDLHQTKCLRFNPDATIWTAKQQVLCALSESLQDVLNYGLFQPATSGRDANFLEEERLLREYPQSFEKGVPYLEFRYKTRVYKQTNLDEKQLAKLHTKTGLKKFLEYVQLGTSDKVARLLDKGLDPNYHDSDSGETPLTLAAQTEGSVEVIRTLCLGGAHIDFRARDGMTALHKAACARHCLALTALLDLGGSPNYKDRRGLTPLFHTAMVGGDPRCCELLLFNRAQLGIADENGWQEIHQACQRGHSQHLEHLLFYGAEPGAQNASGNTALHICALYNKETCARILLYRGADKDVKNNNGQTPFQVAVIAGNFELGELIRNHREQDVVPFQESPKYAARRRGPPGTGLTVPPALLRANSDTSMALPDWMVFSAPGAASSGAPGPTSGSQGQSQPSAPTTKLSSGTLRSASSPRGARARSPSRGRHPEDAKRQPRGRPSSSGTPREGPAGGTGGSGGPGGSLGSRGRRRKLYSAVPGRSFMAVKSYQAQAEGEISLSKGEKIKVLSIGEGGFWEGQVKGRVGWFPSDCLEEVANRSQESKQESRSDKAKRLFRHYTVGSYDSFDAPSLMDGIGPGSDYIIKEKTVLLQKKDSEGFGFVLRGAKAQTPIEEFTPTPAFPALQYLESVDEGGVAWRAGLRMGDFLIEVNGQNVVKVGHRQVVNMIRQGGNTLMVKVVMVTRHPDMDEAVHKKAPQQAKRLPPPTISLRSKSMTSELEEMEYEQQPAPVPSMEKKRTVYQMALNKLDEILAAAQQTISASESPGPGGLASLGKHRPKGFFATESSFDPHHRAQPSYERPSFLPPGPGLMLRQKSIGAAEDDRPYLAPPAMKFSRSLSVPGSEDIPPPPTTSPPEPPYSTPPVPSSSGRLTPSPRGGPFNPGSGGPLPASSPASFDGPSPPDTRVGSREKSLYHSGPLPPAHHHPPHHHHHHAPPPQPHHHHAHPPHPPEMETGGSPDDPPPRLALGPQPSLRGWRGGGPSPTPGAPSPSHHGSAGGGGGSSQGPALRYFQLPPRAASAAMYVPARSGRGRKGPLVKQTKVEGEPQKGGGLPPAPSPTSPASPQPPPAVAAPSEKNSIPIPTIIIKAPSTSSSGRSSQGSSTEAEPPTQPEPTGGGGGGGSSPSPAPAMSPVPPSPSPVPTPASPSGPATLDFTSQFGAALVGAARREGGWQNEARRRSTLFLSTDAGDEDGGDGGLGTGAAPGPRLRHSKSIDEGMFSAEPYLRLESAGSGAGYGGYGAGSRAYGGGGGSSAFTSFLPPRPLVHPLTGKALDPASPLGLALAARERALKESSEGGGAPQPPPRPPSPRYEAPPPTPHHHSPHAHHEPVLRLWGASPPDPARRELGYRAGLGSQEKSLPASPPAARRSLLHRLPPTAPGVGPLLLQLGTEPPAPHPGVSKPWRSAAPEEPERLPLHVRFLENCQPRAPVTSGRGPPSEDGPGVPPPSPRRSVPPSPTSPRASEENGLPLLVLPPPAPSVDVEDGEFLFVEPLPPPLEFSNSFEKPESPLTPGPPHPLPDTPAPATPLPPVPPPAVAAAPPTLDSTASSLTSYDSEVATLTQGASAAPGDPHPPGPPAPAAPAPAAPQPGPDPPPGTDSGIEEVDSRSSSDHPLETISSASTLSSLSAEGGGSAGGGGGAGAGVASGPELLDTYVAYLDGQAFGGSSTPGPPYPPQLMTPSKLRGRALGASGGLRPGPSGGLRDPVTPTSPTVSVTGAGTDGLLALRACSGPPTAGVAGGPVAVEPEVPPVPLPTASSLPRKLLPWEEGPGPPPPPLPGPLAQPQASALATVKASIISELSSKLQQFGGSSAAGGALPWARGGSGGGGDSHHGGASYVPERTSSLQRQRLSDDSQSSLLSKPVSSLFQNWPKPPLPPLPTGTGVSPTAAAAPGATSPSASSSSTSTRHLQGVEFEMRPPLLRRAPSPSLLPASEHKVSPAPRPSSLPILPSGPLYPGLFDIRGSPTGGAGGSADPFAPVFVPPHPGISGGLGGALSGASRSLSPTRLLSLPPDKPFGAKPLGFWTKFDVADWLEWLGLAEHRAQFLDHEIDGSHLPALTKEDYVDLGVTRVGHRMNIDRALKFFLER.

The disordered stretch occupies residues 1-53 (MTHSPATSEDEERHSASECPEGGSESDSSPDGPGRGPRGTRGQGSGAPGSLAS). The span at 17 to 32 (SECPEGGSESDSSPDG) shows a compositional bias: low complexity. A compositionally biased stretch (gly residues) spans 33–47 (PGRGPRGTRGQGSGA). The residue at position 186 (Y186) is a Phosphotyrosine. 6 ANK repeats span residues 212-245 (SGET…FRAR), 246-278 (DGMT…YKDR), 279-312 (RGLT…IADE), 313-345 (NGWQ…AQNA), 346-378 (SGNT…VKNN), and 379-395 (NGQT…NFEL). 2 disordered regions span residues 412–433 (ESPK…VPPA) and 455–546 (GAAS…SRGR). A compositionally biased stretch (low complexity) spans 455-479 (GAASSGAPGPTSGSQGQSQPSAPTT). Residues 527 to 542 (PAGGTGGSGGPGGSLG) show a composition bias toward gly residues. S540 carries the phosphoserine modification. Omega-N-methylarginine is present on R544. Positions 554–613 (VPGRSFMAVKSYQAQAEGEISLSKGEKIKVLSIGEGGFWEGQVKGRVGWFPSDCLEEVAN) constitute an SH3 domain. The 95-residue stretch at 663–757 (TVLLQKKDSE…TLMVKVVMVT (95 aa)) folds into the PDZ domain. Phosphoserine is present on residues S671 and S791. Residues 832 to 886 (TISASESPGPGGLASLGKHRPKGFFATESSFDPHHRAQPSYERPSFLPPGPGLML) are disordered. S890 bears the Phosphoserine mark. 7 disordered regions span residues 909 to 1229 (SRSL…LDFT), 1241 to 1289 (RREG…KSID), 1353 to 1720 (LGLA…GVAS), 1734 to 1785 (GQAF…PTSP), 1827 to 1860 (LPTA…QPQA), 1892 to 1983 (PWAR…TRHL), and 1996 to 2023 (RRAP…LPIL). Positions 920-939 (IPPPPTTSPPEPPYSTPPVP) are enriched in pro residues. Residue R950 is modified to Omega-N-methylarginine. Basic residues predominate over residues 996-1020 (AHHHPPHHHHHHAPPPQPHHHHAHP). Residues R1051, R1090, and R1101 each carry the omega-N-methylarginine modification. A compositionally biased stretch (pro residues) spans 1127 to 1144 (PPAPSPTSPASPQPPPAV). The span at 1164-1181 (STSSSGRSSQGSSTEAEP) shows a compositional bias: low complexity. Pro residues predominate over residues 1199 to 1220 (SPAPAMSPVPPSPSPVPTPASP). Residues 1241–1252 (RREGGWQNEARR) show a composition bias toward basic and acidic residues. An Asymmetric dimethylarginine modification is found at R1253. At S1287 the chain carries Phosphoserine. Residues 1359 to 1368 (ARERALKESS) show a composition bias toward basic and acidic residues. Residues 1374–1391 (PQPPPRPPSPRYEAPPPT) show a composition bias toward pro residues. An Omega-N-methylarginine modification is found at R1423. Residue S1436 is modified to Phosphoserine. 2 stretches are compositionally biased toward pro residues: residues 1517-1532 (GVPP…PSPT) and 1583-1609 (PLTP…PPPA). Positions 1618 to 1636 (DSTASSLTSYDSEVATLTQ) are enriched in polar residues. The span at 1644–1670 (DPHPPGPPAPAAPAPAAPQPGPDPPPG) shows a compositional bias: pro residues. Residues 1678–1688 (VDSRSSSDHPL) show a composition bias toward basic and acidic residues. Positions 1692 to 1702 (SSASTLSSLSA) are enriched in low complexity. 2 stretches are compositionally biased toward gly residues: residues 1703–1718 (EGGG…GAGV) and 1764–1774 (ASGGLRPGPSG). The segment covering 1775–1785 (GLRDPVTPTSP) has biased composition (low complexity). A compositionally biased stretch (pro residues) spans 1844–1855 (PGPPPPPLPGPL). R1895 is modified (omega-N-methylarginine). 3 stretches are compositionally biased toward low complexity: residues 1917–1940 (SSLQ…VSSL), 1954–1980 (TGTG…STST), and 1996–2006 (RRAPSPSLLPA). 3 positions are modified to omega-N-methylarginine: R2016, R2036, and R2074. One can recognise an SAM domain in the interval 2098 to 2161 (WTKFDVADWL…DRALKFFLER (64 aa)).

Belongs to the SHANK family. As to quaternary structure, may homomultimerize via its SAM domain. Interacts with the C-terminus of SSTR2 via the PDZ domain. Interacts with IGSF9, SHARPIN, SPTAN1, HOMER1 and DLGAP1/GKAP isoforms 1 and 2. Part of a complex with DLG4/PSD-95 and DLGAP1/GKAP. Interacts with BAIAP2. Interacts with HOMER1 and HOMER3. As to expression, expressed in brain particularly in the amygdala, hippocampus, substantia nigra and thalamus. Isoform 2 seems to be expressed ubiquitously.

The protein localises to the cytoplasm. The protein resides in the postsynaptic density. It is found in the synapse. In terms of biological role, seems to be an adapter protein in the postsynaptic density (PSD) of excitatory synapses that interconnects receptors of the postsynaptic membrane including NMDA-type and metabotropic glutamate receptors via complexes with GKAP/PSD-95 and Homer, respectively, and the actin-based cytoskeleton. Plays a role in the structural and functional organization of the dendritic spine and synaptic junction. The chain is SH3 and multiple ankyrin repeat domains protein 1 (SHANK1) from Homo sapiens (Human).